A 182-amino-acid polypeptide reads, in one-letter code: Small ribosomal subunit protein uS4c (182 aa).

In terms of domain architecture, S4 RNA-binding spans 82 to 143 (MRLDNILFRL…KQRSKALIQN (62 aa)).

This sequence belongs to the universal ribosomal protein uS4 family. In terms of assembly, part of the 30S ribosomal subunit. Contacts protein S5. The interaction surface between S4 and S5 is involved in control of translational fidelity.

It is found in the plastid. The protein resides in the chloroplast. One of the primary rRNA binding proteins, it binds directly to 16S rRNA where it nucleates assembly of the body of the 30S subunit. Its function is as follows. With S5 and S12 plays an important role in translational accuracy. The sequence is that of Small ribosomal subunit protein uS4c (rps4) from Libertia formosa (Snowy mermaid).